The sequence spans 282 residues: Undecaprenyl-diphosphatase 1 (282 aa).

The next 8 membrane-spanning stretches (helical) occupy residues 1 to 21 (MLLLQIVVLALIQGITEVLPL), 46 to 66 (GVALDVAVHLGTLGAVALYFW), 91 to 111 (AFLVVLGTLPAVATVLLLAHF), 117 to 137 (SPGLATIGWTTLGFGLLLGVI), 150 to 170 (MGGIDCLLIGLAQCLALLPGV), 193 to 213 (FSMLLSIPAIAGAATLVGLDL), 226 to 246 (LIAAVTAFLAAFLAVAAMMAW), and 260 to 280 (VLLGAALLALAYLGPDLAPFL).

This sequence belongs to the UppP family.

It localises to the cell inner membrane. The enzyme catalyses di-trans,octa-cis-undecaprenyl diphosphate + H2O = di-trans,octa-cis-undecaprenyl phosphate + phosphate + H(+). Catalyzes the dephosphorylation of undecaprenyl diphosphate (UPP). Confers resistance to bacitracin. This is Undecaprenyl-diphosphatase 1 from Rhodospirillum rubrum (strain ATCC 11170 / ATH 1.1.1 / DSM 467 / LMG 4362 / NCIMB 8255 / S1).